An 86-amino-acid chain; its full sequence is Photosystem I reaction center subunit PsaK (86 aa).

2 helical membrane-spanning segments follow: residues 15 to 35 and 57 to 77; these read SWSI…IGLG and GLPE…GAII.

It belongs to the PsaG/PsaK family.

The protein localises to the plastid. The protein resides in the chloroplast thylakoid membrane. The sequence is that of Photosystem I reaction center subunit PsaK from Gracilaria tenuistipitata var. liui (Red alga).